Here is a 342-residue protein sequence, read N- to C-terminus: Autoinducer 2 import system permease protein LsrC (342 aa).

The Periplasmic segment spans residues 1-13; that stretch reads MLKFIQNNREITA. The helical transmembrane segment at 14–34 threads the bilayer; sequence LLAVVLLFVLPGFLDRQYLSV. The Cytoplasmic segment spans residues 35 to 38; that stretch reads QTLT. A helical transmembrane segment spans residues 39-59; sequence MVYSSAQILILLAMGATLVML. Over 60 to 69 the chain is Periplasmic; sequence TRNIDVSVGS. A helical transmembrane segment spans residues 70–90; it reads ITGMCAVLLGMLLNAGYSLPV. The Cytoplasmic segment spans residues 91-92; that stretch reads AC. Residues 93 to 113 traverse the membrane as a helical segment; the sequence is VTTLLLGLLAGFFNGVLVAWL. Lysine 114 is a topological domain (periplasmic). The helical transmembrane segment at 115–135 threads the bilayer; the sequence is IPAIVATLGTLGLYRGIMLLW. The Cytoplasmic segment spans residues 136 to 154; that stretch reads TGGKWIEGLPAELKQLSAP. A helical membrane pass occupies residues 155-175; it reads LLFGVSAIGWLTIILVAFMAW. Topologically, residues 176–212 are periplasmic; it reads LLAKTAFGRSFYATGDNLQGARQLGVRTEAIRIVAFS. The chain crosses the membrane as a helical span at residues 213–233; that stretch reads LNGCMAALAGIVFASQIGFIP. Residues 234–251 are Cytoplasmic-facing; sequence NQTGTGLEMKAIAACVLG. A helical transmembrane segment spans residues 252–272; the sequence is GISLLGGSGAIIGAVLGAWFL. The Periplasmic portion of the chain corresponds to 273 to 283; the sequence is TQIDSVLVLLR. The helical transmembrane segment at 284–304 threads the bilayer; that stretch reads IPAWWNDFIAGLVLLAVLVFD. Residues 305-342 are Cytoplasmic-facing; that stretch reads GRLRCALERNLRRQKYARFMTPPPSVKPASSGKKREAA.

It belongs to the binding-protein-dependent transport system permease family. AraH/RbsC subfamily. The complex is composed of two ATP-binding proteins (LsrA), two transmembrane proteins (LsrC and LsrD) and a solute-binding protein (LsrB).

Its subcellular location is the cell inner membrane. Functionally, part of the ABC transporter complex LsrABCD involved in autoinducer 2 (AI-2) import. Probably responsible for the translocation of the substrate across the membrane. This is Autoinducer 2 import system permease protein LsrC (lsrC) from Escherichia coli O9:H4 (strain HS).